The chain runs to 506 residues: Probable E3 ubiquitin-protein ligase ARI14 (506 aa).

The segment at 79–308 (PDSSSEISLE…VDSGFCIKTE (230 aa)) is TRIAD supradomain. The RING-type 1 zinc-finger motif lies at 83–140 (SEISLETDVYEFDGDNDLISMPFCSHKFDSKYWREYLEKNFYYVEKIQTTISCPDQDC). Residues Cys106, His108, Cys135, Cys140, Cys180, Cys185, Cys207, Cys209, Cys214, Cys217, His222, Cys227, Cys258, Cys261, Cys277, Cys279, Cys284, Cys287, His294, and Cys304 each contribute to the Zn(2+) site. An IBR-type zinc finger spans residues 158–227 (EMYERYIWRS…RLESHRPVSC (70 aa)). An RING-type 2; atypical zinc finger spans residues 258 to 287 (CPHCLCSLESDTKMPQFLTCVCRLRFCSRC). The RanBP2-type zinc finger occupies 462-492 (GTGPFWYCDRCTYANTWEDNECEMCYDDSAS).

This sequence belongs to the RBR family. Ariadne subfamily. Requires Zn(2+) as cofactor. As to expression, mostly expressed in closed flowers and, to a lower extent, in pollen.

The enzyme catalyses [E2 ubiquitin-conjugating enzyme]-S-ubiquitinyl-L-cysteine + [acceptor protein]-L-lysine = [E2 ubiquitin-conjugating enzyme]-L-cysteine + [acceptor protein]-N(6)-ubiquitinyl-L-lysine.. It functions in the pathway protein modification; protein ubiquitination. Functionally, might act as an E3 ubiquitin-protein ligase, or as part of E3 complex, which accepts ubiquitin from specific E2 ubiquitin-conjugating enzymes and then transfers it to substrates. Negatively regulates male gametophyte formation and double fertilization. The sequence is that of Probable E3 ubiquitin-protein ligase ARI14 from Arabidopsis thaliana (Mouse-ear cress).